Consider the following 551-residue polypeptide: Glucose-6-phosphate isomerase (551 aa).

E352 functions as the Proton donor in the catalytic mechanism. Catalysis depends on residues H383 and K511.

The protein belongs to the GPI family.

The protein resides in the cytoplasm. The catalysed reaction is alpha-D-glucose 6-phosphate = beta-D-fructose 6-phosphate. It functions in the pathway carbohydrate biosynthesis; gluconeogenesis. Its pathway is carbohydrate degradation; glycolysis; D-glyceraldehyde 3-phosphate and glycerone phosphate from D-glucose: step 2/4. In terms of biological role, catalyzes the reversible isomerization of glucose-6-phosphate to fructose-6-phosphate. The chain is Glucose-6-phosphate isomerase from Chlorobium luteolum (strain DSM 273 / BCRC 81028 / 2530) (Pelodictyon luteolum).